Here is a 501-residue protein sequence, read N- to C-terminus: 2,3-bisphosphoglycerate-independent phosphoglycerate mutase (501 aa).

Residues aspartate 12 and serine 62 each coordinate Mn(2+). The active-site Phosphoserine intermediate is the serine 62. Substrate contacts are provided by residues histidine 121, 150-151 (RD), arginine 182, arginine 188, 253-256 (RSDR), and lysine 323. The Mn(2+) site is built by aspartate 390, histidine 394, aspartate 431, histidine 432, and histidine 450.

This sequence belongs to the BPG-independent phosphoglycerate mutase family. Monomer. Requires Mn(2+) as cofactor.

The enzyme catalyses (2R)-2-phosphoglycerate = (2R)-3-phosphoglycerate. It participates in carbohydrate degradation; glycolysis; pyruvate from D-glyceraldehyde 3-phosphate: step 3/5. In terms of biological role, catalyzes the interconversion of 2-phosphoglycerate and 3-phosphoglycerate. The chain is 2,3-bisphosphoglycerate-independent phosphoglycerate mutase from Ehrlichia canis (strain Jake).